Here is a 207-residue protein sequence, read N- to C-terminus: Phosphoserine phosphatase (207 aa).

The active-site Nucleophile is D8. Positions 8 and 10 each coordinate Mg(2+). D10 (proton donor) is an active-site residue. Residues E17, R53, 96 to 97 (SG), and K141 each bind substrate. A Mg(2+)-binding site is contributed by D164. A substrate-binding site is contributed by N167.

The protein belongs to the HAD-like hydrolase superfamily. SerB family. The cofactor is Mg(2+).

It catalyses the reaction O-phospho-L-serine + H2O = L-serine + phosphate. The enzyme catalyses O-phospho-D-serine + H2O = D-serine + phosphate. It functions in the pathway amino-acid biosynthesis; L-serine biosynthesis; L-serine from 3-phospho-D-glycerate: step 3/3. The polypeptide is Phosphoserine phosphatase (Campylobacter jejuni subsp. doylei (strain ATCC BAA-1458 / RM4099 / 269.97)).